A 212-amino-acid polypeptide reads, in one-letter code: Phosphoribosylformylglycinamidine synthase subunit PurQ (212 aa).

Residues 2–212 (RIAVLKFPGT…WLGLISWLRR (211 aa)) enclose the Glutamine amidotransferase type-1 domain. The active-site Nucleophile is cysteine 85. Residues histidine 183, glutamate 185, and histidine 191 contribute to the active site.

In terms of assembly, part of the FGAM synthase complex composed of 1 PurL, 1 PurQ and 2 PurS subunits.

The protein resides in the cytoplasm. It catalyses the reaction N(2)-formyl-N(1)-(5-phospho-beta-D-ribosyl)glycinamide + L-glutamine + ATP + H2O = 2-formamido-N(1)-(5-O-phospho-beta-D-ribosyl)acetamidine + L-glutamate + ADP + phosphate + H(+). It carries out the reaction L-glutamine + H2O = L-glutamate + NH4(+). Its pathway is purine metabolism; IMP biosynthesis via de novo pathway; 5-amino-1-(5-phospho-D-ribosyl)imidazole from N(2)-formyl-N(1)-(5-phospho-D-ribosyl)glycinamide: step 1/2. Its function is as follows. Part of the phosphoribosylformylglycinamidine synthase complex involved in the purines biosynthetic pathway. Catalyzes the ATP-dependent conversion of formylglycinamide ribonucleotide (FGAR) and glutamine to yield formylglycinamidine ribonucleotide (FGAM) and glutamate. The FGAM synthase complex is composed of three subunits. PurQ produces an ammonia molecule by converting glutamine to glutamate. PurL transfers the ammonia molecule to FGAR to form FGAM in an ATP-dependent manner. PurS interacts with PurQ and PurL and is thought to assist in the transfer of the ammonia molecule from PurQ to PurL. The chain is Phosphoribosylformylglycinamidine synthase subunit PurQ from Pyrobaculum aerophilum (strain ATCC 51768 / DSM 7523 / JCM 9630 / CIP 104966 / NBRC 100827 / IM2).